Here is a 388-residue protein sequence, read N- to C-terminus: tRNA (guanine-N(7)-)-methyltransferase (388 aa).

S-adenosyl-L-methionine is bound by residues Glu-129, Glu-154, and Asp-181. Substrate contacts are provided by Lys-207 and Asp-237.

Belongs to the class I-like SAM-binding methyltransferase superfamily. TrmB family.

It carries out the reaction guanosine(46) in tRNA + S-adenosyl-L-methionine = N(7)-methylguanosine(46) in tRNA + S-adenosyl-L-homocysteine. Its pathway is tRNA modification; N(7)-methylguanine-tRNA biosynthesis. Catalyzes the formation of N(7)-methylguanine at position 46 (m7G46) in tRNA. The sequence is that of tRNA (guanine-N(7)-)-methyltransferase from Wolinella succinogenes (strain ATCC 29543 / DSM 1740 / CCUG 13145 / JCM 31913 / LMG 7466 / NCTC 11488 / FDC 602W) (Vibrio succinogenes).